Here is a 187-residue protein sequence, read N- to C-terminus: UPF0301 protein Shewmr7_1270 (187 aa).

It belongs to the UPF0301 (AlgH) family.

This chain is UPF0301 protein Shewmr7_1270, found in Shewanella sp. (strain MR-7).